The sequence spans 401 residues: Coenzyme A biosynthesis bifunctional protein CoaBC (401 aa).

Residues 1–190 form a phosphopantothenoylcysteine decarboxylase region; the sequence is MQTLAGKKIL…FQPKPLQDKS (190 aa). The active-site Proton donor is the Cys159. The tract at residues 191–401 is phosphopantothenate--cysteine ligase; that stretch reads ILITAGPTRE…LKQIQTLMGH (211 aa). CTP contacts are provided by residues Asp279, Lys289, 307-310, Phe326, Lys340, and Lys344; that span reads PDIV.

This sequence in the N-terminal section; belongs to the HFCD (homo-oligomeric flavin containing Cys decarboxylase) superfamily. The protein in the C-terminal section; belongs to the PPC synthetase family. The cofactor is Mg(2+). FMN is required as a cofactor.

It carries out the reaction N-[(R)-4-phosphopantothenoyl]-L-cysteine + H(+) = (R)-4'-phosphopantetheine + CO2. The catalysed reaction is (R)-4'-phosphopantothenate + L-cysteine + CTP = N-[(R)-4-phosphopantothenoyl]-L-cysteine + CMP + diphosphate + H(+). Its pathway is cofactor biosynthesis; coenzyme A biosynthesis; CoA from (R)-pantothenate: step 2/5. It functions in the pathway cofactor biosynthesis; coenzyme A biosynthesis; CoA from (R)-pantothenate: step 3/5. Functionally, catalyzes two sequential steps in the biosynthesis of coenzyme A. In the first step cysteine is conjugated to 4'-phosphopantothenate to form 4-phosphopantothenoylcysteine. In the second step the latter compound is decarboxylated to form 4'-phosphopantotheine. This chain is Coenzyme A biosynthesis bifunctional protein CoaBC, found in Vibrio vulnificus (strain YJ016).